The primary structure comprises 325 residues: Apoptosis-enhancing nuclease (325 aa).

Positions 27-35 (RKRHKRRSR) match the Nucleolar localization signal motif. The interval 53–105 (LSMPPEPGSSPLPTPFGAVTATEDASSGKQCPRAGSGGAPCSRRPAPGKASGP) is disordered. Residues 56-66 (PPEPGSSPLPT) are compositionally biased toward pro residues. The Exonuclease domain maps to 110–266 (CVAIDCEMVG…EDATTAMELY (157 aa)). A Nuclear localization signal motif is present at residues 165 to 188 (RQHMCKAIPFQVAQKEILKLLKGK). Residues 281-325 (LWTCPEDREPDSSTDMEQYMEDQYWPDDLAHGSRGGAREAQDRRN) form a disordered region. The segment covering 308-325 (DLAHGSRGGAREAQDRRN) has biased composition (basic and acidic residues).

The protein localises to the nucleus. The protein resides in the nucleolus. Exonuclease with activity against single- and double-stranded DNA and RNA. Mediates p53-induced apoptosis. When induced by p53 following DNA damage, digests double-stranded DNA to form single-stranded DNA and amplifies DNA damage signals, leading to enhancement of apoptosis. This Pongo abelii (Sumatran orangutan) protein is Apoptosis-enhancing nuclease (AEN).